We begin with the raw amino-acid sequence, 255 residues long: PABIR family member 2 (255 aa).

The disordered stretch occupies residues 1 to 24; it reads MAQEKMDLDFEADTSEGATLRRSN. Ala2 carries the post-translational modification N-acetylalanine. Ser25, Ser33, Ser50, and Ser58 each carry phosphoserine. Residue Thr112 is modified to Phosphothreonine. Ser115 and Ser119 each carry phosphoserine. Arg122 is modified (omega-N-methylarginine). Phosphoserine is present on Ser145. Disordered stretches follow at residues 169–196 and 219–238; these read LGPL…SMLS and SGLS…SPVA. Residues 174–184 are compositionally biased toward basic and acidic residues; it reads RKGEMEMESQP.

It belongs to the FAM122 family.

The chain is PABIR family member 2 from Mus musculus (Mouse).